A 458-amino-acid polypeptide reads, in one-letter code: ATP synthase subunit beta (458 aa).

Position 148–155 (148–155 (GGAGVGKT)) interacts with ATP.

It belongs to the ATPase alpha/beta chains family. As to quaternary structure, F-type ATPases have 2 components, CF(1) - the catalytic core - and CF(0) - the membrane proton channel. CF(1) has five subunits: alpha(3), beta(3), gamma(1), delta(1), epsilon(1). CF(0) has three main subunits: a(1), b(2) and c(9-12). The alpha and beta chains form an alternating ring which encloses part of the gamma chain. CF(1) is attached to CF(0) by a central stalk formed by the gamma and epsilon chains, while a peripheral stalk is formed by the delta and b chains.

It localises to the cell inner membrane. The catalysed reaction is ATP + H2O + 4 H(+)(in) = ADP + phosphate + 5 H(+)(out). Produces ATP from ADP in the presence of a proton gradient across the membrane. The catalytic sites are hosted primarily by the beta subunits. This Ectopseudomonas mendocina (strain ymp) (Pseudomonas mendocina) protein is ATP synthase subunit beta.